Reading from the N-terminus, the 169-residue chain is Peptide methionine sulfoxide reductase MsrA (169 aa).

Cys-10 is an active-site residue.

It belongs to the MsrA Met sulfoxide reductase family.

It carries out the reaction L-methionyl-[protein] + [thioredoxin]-disulfide + H2O = L-methionyl-(S)-S-oxide-[protein] + [thioredoxin]-dithiol. It catalyses the reaction [thioredoxin]-disulfide + L-methionine + H2O = L-methionine (S)-S-oxide + [thioredoxin]-dithiol. Has an important function as a repair enzyme for proteins that have been inactivated by oxidation. Catalyzes the reversible oxidation-reduction of methionine sulfoxide in proteins to methionine. This Streptococcus agalactiae serotype Ia (strain ATCC 27591 / A909 / CDC SS700) protein is Peptide methionine sulfoxide reductase MsrA.